The chain runs to 276 residues: Digeranylgeranylglyceryl phosphate synthase (276 aa).

Transmembrane regions (helical) follow at residues 12-34 (PHNC…GSVP), 38-60 (ILIL…NDYF), 84-104 (ALWY…LISL), 107-127 (FAFA…LKPL), 146-166 (GAIA…AFLV), 202-222 (VAAF…KAGV), 224-244 (VGYY…YLIL), and 256-276 (QLLL…AALM).

The protein belongs to the UbiA prenyltransferase family. DGGGP synthase subfamily. Mg(2+) serves as cofactor.

The protein resides in the cell membrane. The enzyme catalyses sn-3-O-(geranylgeranyl)glycerol 1-phosphate + (2E,6E,10E)-geranylgeranyl diphosphate = 2,3-bis-O-(geranylgeranyl)-sn-glycerol 1-phosphate + diphosphate. Its pathway is membrane lipid metabolism; glycerophospholipid metabolism. Prenyltransferase that catalyzes the transfer of the geranylgeranyl moiety of geranylgeranyl diphosphate (GGPP) to the C2 hydroxyl of (S)-3-O-geranylgeranylglyceryl phosphate (GGGP). This reaction is the second ether-bond-formation step in the biosynthesis of archaeal membrane lipids. In Thermococcus gammatolerans (strain DSM 15229 / JCM 11827 / EJ3), this protein is Digeranylgeranylglyceryl phosphate synthase.